The chain runs to 510 residues: Aspartate kinase FUB3 (510 aa).

2 consecutive ACT domains span residues 372 to 440 (ILSN…VLPD) and 446 to 510 (LVGA…KNAM).

The protein belongs to the aspartokinase family.

It carries out the reaction L-aspartate + ATP = 4-phospho-L-aspartate + ADP. Its pathway is mycotoxin biosynthesis. In terms of biological role, aspartate kinase; part of the gene cluster that mediates the biosynthesis of fusaric acid, a mycotoxin with low to moderate toxicity to animals and humans, but with high phytotoxic properties. L-aspartate is suggested as fusaric acid amino acid precursor that is activated and further processed to O-acetyl-L-homoserine by cluster enzymes aspartate kinase FUB3 and homoserine O-acetyltransferase FUB5, as well as enzymes of the primary metabolism. The polyketide synthase (PKS) FUB1 generates the triketide trans-2-hexenal which is presumptively released by the hydrolase FUB4 and linked to the NRPS-bound amino acid precursor by NAD(P)-dependent dehydrogenase FUB6. FUB1, FUB4, and the non-canonical NRPS Fub8 may form an enzyme complex. Further processing of the NRPS-bound intermediate might be carried out by FUB6 and the sulfhydrylase FUB7, enabling a spontaneous electrocyclization to close the carbon backbone of fusaric acid. Dihydrofusaric acid is likely to be released via reduction by the thioester reductase (TR) domain of FUB8 whereupon the final oxidation to fusaric acid may (also) be performed by the FMN-dependent dehydrogenase FUB9. The sequence is that of Aspartate kinase FUB3 from Gibberella moniliformis (strain M3125 / FGSC 7600) (Maize ear and stalk rot fungus).